Reading from the N-terminus, the 434-residue chain is Serine--tRNA ligase (434 aa).

Residue 239–241 (TAE) participates in L-serine binding. Residue 270–272 (RSE) coordinates ATP. Residue Glu293 participates in L-serine binding. 357-360 (EISS) provides a ligand contact to ATP. Ser392 is an L-serine binding site.

The protein belongs to the class-II aminoacyl-tRNA synthetase family. Type-1 seryl-tRNA synthetase subfamily. In terms of assembly, homodimer. The tRNA molecule binds across the dimer.

Its subcellular location is the cytoplasm. The enzyme catalyses tRNA(Ser) + L-serine + ATP = L-seryl-tRNA(Ser) + AMP + diphosphate + H(+). It catalyses the reaction tRNA(Sec) + L-serine + ATP = L-seryl-tRNA(Sec) + AMP + diphosphate + H(+). The protein operates within aminoacyl-tRNA biosynthesis; selenocysteinyl-tRNA(Sec) biosynthesis; L-seryl-tRNA(Sec) from L-serine and tRNA(Sec): step 1/1. Its function is as follows. Catalyzes the attachment of serine to tRNA(Ser). Is also able to aminoacylate tRNA(Sec) with serine, to form the misacylated tRNA L-seryl-tRNA(Sec), which will be further converted into selenocysteinyl-tRNA(Sec). The polypeptide is Serine--tRNA ligase (Cupriavidus taiwanensis (strain DSM 17343 / BCRC 17206 / CCUG 44338 / CIP 107171 / LMG 19424 / R1) (Ralstonia taiwanensis (strain LMG 19424))).